The following is a 36-amino-acid chain: Pancreatic polypeptide (36 aa).

Tyr-36 is modified (tyrosine amide).

This sequence belongs to the NPY family.

The protein localises to the secreted. In terms of biological role, hormone secreted by pancreatic cells that acts as a regulator of pancreatic and gastrointestinal functions. The chain is Pancreatic polypeptide (PPY) from Meleagris gallopavo (Wild turkey).